Consider the following 53-residue polypeptide: ATP synthase protein 8 (53 aa).

A helical transmembrane segment spans residues 6 to 26 (PIGWLSLFIIFSLTFILFSMM).

Belongs to the ATPase protein 8 family. In terms of assembly, F-type ATPases have 2 components, CF(1) - the catalytic core - and CF(0) - the membrane proton channel.

Its subcellular location is the mitochondrion membrane. Functionally, mitochondrial membrane ATP synthase (F(1)F(0) ATP synthase or Complex V) produces ATP from ADP in the presence of a proton gradient across the membrane which is generated by electron transport complexes of the respiratory chain. F-type ATPases consist of two structural domains, F(1) - containing the extramembraneous catalytic core and F(0) - containing the membrane proton channel, linked together by a central stalk and a peripheral stalk. During catalysis, ATP synthesis in the catalytic domain of F(1) is coupled via a rotary mechanism of the central stalk subunits to proton translocation. Part of the complex F(0) domain. Minor subunit located with subunit a in the membrane. This Ceratitis capitata (Mediterranean fruit fly) protein is ATP synthase protein 8 (mt:ATPase8).